A 387-amino-acid polypeptide reads, in one-letter code: Prostatic acid phosphatase (387 aa).

A signal peptide spans 1–34 (MRNAALLMTRATSLRLSLLLLLSFLPDLDGGVRA). Arg-45 provides a ligand contact to substrate. His-46 serves as the catalytic Nucleophile. Arg-49 lines the substrate pocket. An N-linked (GlcNAc...) asparagine glycan is attached at Asn-96. Residue Arg-113 participates in substrate binding. 3 disulfides stabilise this stretch: Cys-163–Cys-374, Cys-217–Cys-315, and Cys-349–Cys-353. An N-linked (GlcNAc...) asparagine glycan is attached at Asn-222. His-291 contributes to the substrate binding site. Asp-292 (proton donor) is an active-site residue. Asn-335 carries an N-linked (GlcNAc...) asparagine glycan.

Belongs to the histidine acid phosphatase family. As to quaternary structure, homodimer; dimer formation is required for phosphatase activity.

The protein resides in the secreted. It carries out the reaction a phosphate monoester + H2O = an alcohol + phosphate. It catalyses the reaction 1-(9Z-octadecenoyl)-sn-glycero-3-phosphate + H2O = 1-(9Z-octadecenoyl)-sn-glycerol + phosphate. The enzyme catalyses O-phospho-L-tyrosyl-[protein] + H2O = L-tyrosyl-[protein] + phosphate. In terms of biological role, a non-specific tyrosine phosphatase that dephosphorylates a diverse number of substrates under acidic conditions (pH 4-6) including alkyl, aryl, and acyl orthophosphate monoesters and phosphorylated proteins. Has lipid phosphatase activity and inactivates lysophosphatidic acid in seminal plasma. In Bos taurus (Bovine), this protein is Prostatic acid phosphatase (ACP3).